The following is a 190-amino-acid chain: UPF0340 protein BCE33L5016 (190 aa).

This sequence belongs to the UPF0340 family.

The chain is UPF0340 protein BCE33L5016 from Bacillus cereus (strain ZK / E33L).